Reading from the N-terminus, the 330-residue chain is Putative zinc finger protein CONSTANS-LIKE 11 (330 aa).

4 residues coordinate Zn(2+): Cys5, Cys8, Cys28, and His33. The segment at 5–47 adopts a B box-type 1; atypical zinc-finger fold; sequence CDFCGTEKALIYCKSDSAKLCLNCDVNVHSANPLSQRHTRSLL. A B box-type 2; degenerate zinc finger spans residues 48–88; it reads CEKCSLQPTAVHCMNENVSLCQGCQWTASNCTGLGHRLQSL. Positions 276–318 constitute a CCT domain; that stretch reads RDEAKKRYKQKKSKRMFGKQIRYASRKARADTRKRVKGRFVKS.

The protein belongs to the CONSTANS family.

Its subcellular location is the nucleus. This chain is Putative zinc finger protein CONSTANS-LIKE 11 (COL11), found in Arabidopsis thaliana (Mouse-ear cress).